The following is a 204-amino-acid chain: Small rubber particle protein (204 aa).

The protein belongs to the REF/SRPP family. Auto-assembles in solution into stable nanomultimers of a globular nature. In terms of processing, not glycosylated. The N-terminus is blocked. Post-translationally, consistent shifts of about 266 Da observed by MS in various forms of the intact protein suggest the addition of stearolyl groups. In terms of tissue distribution, highly expressed in the specialized vessel laticifers, but localized only in the laticifer layers in the conducting phloem. Also detected in leaves.

It localises to the cytoplasm. Functionally, involved in the biosynthesis of rubber, an isoprenoid polymer (cis-1,4-polyisoprene). This chain is Small rubber particle protein, found in Hevea brasiliensis (Para rubber tree).